Reading from the N-terminus, the 452-residue chain is MAPSLSPIRSHHVAVIGAGAAGLVAARELRREGHSVVVFERQKQVGGTWIYTDHIEPDPLSVDPTRSVVHSSVYGSLRTNLPRECMGYRDFPFVIRSDVSESRDPRRFPSHGEVLAYLQDFAKEFAIEEMIRFDTAVVKVAPAAEEGSGKWRIESTEKEKKVLRDEIYDAVVVCNGHYIEPRHAEIPGISSWPGKEMHSHNYRIPEPFRDQVVVLIGNSASADDISRDIARVAKEVHVACRSNAADTYIERPGYSNLWMHSMIESVHEDGSVVFQNGKTISVDVIMHCTGYKYHFPFLETNGNVTVDDNRVGPLYKDVFSPAFAPWLSFVGIPWKVVPFPMFELQSKWIAGVLSGRIPLPSKEDMMMEIKTLYSTLDAQGIAKRYTHQMGISQFEYNSWLASQCGCSETEEWRKEMYFATGVKKRAHPETYRDEWDDHHLVSQAYQDFSLYT.

17–22 (GAGAAG) contributes to the FAD binding site. 217–222 (GNSASA) contributes to the NADP(+) binding site.

The protein belongs to the FMO family. It depends on FAD as a cofactor.

In terms of biological role, catalyzes the conversion of methylthioalkyl glucosinolates of any chain length into methylsulfinylalkyl glucosinolates. The chain is Flavin-containing monooxygenase FMO GS-OX-like 4 from Arabidopsis thaliana (Mouse-ear cress).